The primary structure comprises 381 residues: Homoserine O-succinyltransferase (381 aa).

One can recognise an AB hydrolase-1 domain in the interval 45 to 360; the sequence is NAVLVCHALN…PHGHDAFLLD (316 aa). Residue Ser-151 is the Nucleophile of the active site. Substrate is bound at residue Arg-221. Residues Asp-321 and His-354 contribute to the active site. Substrate is bound at residue Asp-355.

The protein belongs to the AB hydrolase superfamily. MetX family. Homodimer.

The protein localises to the cytoplasm. It carries out the reaction L-homoserine + succinyl-CoA = O-succinyl-L-homoserine + CoA. It participates in amino-acid biosynthesis; L-methionine biosynthesis via de novo pathway; O-succinyl-L-homoserine from L-homoserine: step 1/1. Its function is as follows. Transfers a succinyl group from succinyl-CoA to L-homoserine, forming succinyl-L-homoserine. The chain is Homoserine O-succinyltransferase from Burkholderia mallei (strain NCTC 10247).